Consider the following 393-residue polypeptide: Putative amino-acid ABC transporter permease protein YhdX (393 aa).

Transmembrane regions (helical) follow at residues 21 to 41, 92 to 112, 128 to 148, 180 to 200, 219 to 239, 256 to 276, 333 to 353, and 363 to 383; these read AWLF…WLFH, LLVS…IGLA, IEIF…FAVL, DGFI…VGLF, IAAV…GAAL, VLIP…SAFI, SSLA…GTVL, and IAMT…LMNI. An ABC transmembrane type-1 domain is found at 88–381; it reads LLNTLLVSAL…IISLTISLLM (294 aa).

Belongs to the binding-protein-dependent transport system permease family. HisMQ subfamily.

It localises to the cell inner membrane. In terms of biological role, probably part of the binding-protein-dependent transport system YdhWXYZ for an amino acid; probably responsible for the translocation of the substrate across the membrane. This is Putative amino-acid ABC transporter permease protein YhdX (yhdX) from Escherichia coli (strain K12).